A 426-amino-acid polypeptide reads, in one-letter code: Serine--tRNA ligase (426 aa).

233–235 contacts L-serine; it reads TAE. Position 264–266 (264–266) interacts with ATP; the sequence is RSE. Residue Glu-287 participates in L-serine binding. 351–354 is a binding site for ATP; that stretch reads EISS. Ser-385 contributes to the L-serine binding site.

This sequence belongs to the class-II aminoacyl-tRNA synthetase family. Type-1 seryl-tRNA synthetase subfamily. Homodimer. The tRNA molecule binds across the dimer.

The protein localises to the cytoplasm. The catalysed reaction is tRNA(Ser) + L-serine + ATP = L-seryl-tRNA(Ser) + AMP + diphosphate + H(+). It catalyses the reaction tRNA(Sec) + L-serine + ATP = L-seryl-tRNA(Sec) + AMP + diphosphate + H(+). Its pathway is aminoacyl-tRNA biosynthesis; selenocysteinyl-tRNA(Sec) biosynthesis; L-seryl-tRNA(Sec) from L-serine and tRNA(Sec): step 1/1. Catalyzes the attachment of serine to tRNA(Ser). Is also able to aminoacylate tRNA(Sec) with serine, to form the misacylated tRNA L-seryl-tRNA(Sec), which will be further converted into selenocysteinyl-tRNA(Sec). This is Serine--tRNA ligase from Brachyspira hyodysenteriae (strain ATCC 49526 / WA1).